Consider the following 70-residue polypeptide: UPF0150 protein TM_1311 (70 aa).

The protein belongs to the UPF0150 family.

This chain is UPF0150 protein TM_1311, found in Thermotoga maritima (strain ATCC 43589 / DSM 3109 / JCM 10099 / NBRC 100826 / MSB8).